We begin with the raw amino-acid sequence, 296 residues long: Enoyl-CoA hydratase AKT3-2 (296 aa).

The Peroxisomal targeting signal type 1 motif lies at 294 to 296 (PKL).

The protein belongs to the enoyl-CoA hydratase/isomerase family.

It localises to the peroxisome. It carries out the reaction a (3S)-3-hydroxyacyl-CoA = a (2E)-enoyl-CoA + H2O. It catalyses the reaction a 4-saturated-(3S)-3-hydroxyacyl-CoA = a (3E)-enoyl-CoA + H2O. Its pathway is mycotoxin biosynthesis. Enoyl-CoA hydratase; part of the gene clusters that mediate the biosynthesis of the host-selective toxins (HSTs) AK-toxins responsible for Japanese pear black spot disease by the Japanese pear pathotype. AK-toxins are esters of 9,10-epoxy 8-hydroxy 9-methyldecatrienoic acid (EDA). On cellular level, AK-toxins affect plasma membrane of susceptible cells and cause a sudden increase in loss of K(+) after a few minutes of toxin treatment. The acyl-CoA ligase AKT1, the hydrolase AKT2 and enoyl-CoA hydratase AKT3 are all involved in the biosynthesis of the AK-, AF- and ACT-toxin common 9,10-epoxy-8-hydroxy-9-methyl-decatrienoic acid (EDA) structural moiety. Part of the EDA biosynthesis occurs in the peroxisome since these 3 enzymes are localized in peroxisomes. The exact roles of the 3 enzymes, as well as of additional AK-toxin clusters enzymes, including AKT4, AKT6 and AKTS1, have still to be elucidated. The Cytochrome P450 monooxygenase AKT7 on the other side functions to limit production of EDA and AK-toxin, probably via the catalysis of a side reaction of EDA or its precursor. This Alternaria alternata (Alternaria rot fungus) protein is Enoyl-CoA hydratase AKT3-2.